Here is a 217-residue protein sequence, read N- to C-terminus: UPF0323 lipoprotein HPP12_0232 (217 aa).

The N-terminal stretch at methionine 1 to glycine 27 is a signal peptide. Cysteine 28 carries N-palmitoyl cysteine lipidation. The S-diacylglycerol cysteine moiety is linked to residue cysteine 28. A compositionally biased stretch (polar residues) spans glutamine 160–arginine 171. The tract at residues glutamine 160 to serine 217 is disordered. Residues serine 172–serine 185 are compositionally biased toward low complexity. Over residues methionine 186 to phenylalanine 197 the composition is skewed to polar residues. Positions serine 199–serine 210 are enriched in low complexity.

The protein belongs to the UPF0323 family.

The protein localises to the cell membrane. The polypeptide is UPF0323 lipoprotein HPP12_0232 (Helicobacter pylori (strain P12)).